A 297-amino-acid chain; its full sequence is Bifunctional protein FolD 2 (297 aa).

Residues 173-175 (GKS), serine 198, and isoleucine 239 contribute to the NADP(+) site.

The protein belongs to the tetrahydrofolate dehydrogenase/cyclohydrolase family. As to quaternary structure, homodimer.

It carries out the reaction (6R)-5,10-methylene-5,6,7,8-tetrahydrofolate + NADP(+) = (6R)-5,10-methenyltetrahydrofolate + NADPH. The catalysed reaction is (6R)-5,10-methenyltetrahydrofolate + H2O = (6R)-10-formyltetrahydrofolate + H(+). The protein operates within one-carbon metabolism; tetrahydrofolate interconversion. Catalyzes the oxidation of 5,10-methylenetetrahydrofolate to 5,10-methenyltetrahydrofolate and then the hydrolysis of 5,10-methenyltetrahydrofolate to 10-formyltetrahydrofolate. The polypeptide is Bifunctional protein FolD 2 (Sinorhizobium medicae (strain WSM419) (Ensifer medicae)).